The sequence spans 427 residues: Glutamate-1-semialdehyde 2,1-aminomutase (427 aa).

An N6-(pyridoxal phosphate)lysine modification is found at Lys263.

Belongs to the class-III pyridoxal-phosphate-dependent aminotransferase family. HemL subfamily. Homodimer. Pyridoxal 5'-phosphate is required as a cofactor.

Its subcellular location is the cytoplasm. It carries out the reaction (S)-4-amino-5-oxopentanoate = 5-aminolevulinate. It functions in the pathway porphyrin-containing compound metabolism; protoporphyrin-IX biosynthesis; 5-aminolevulinate from L-glutamyl-tRNA(Glu): step 2/2. This Caldicellulosiruptor saccharolyticus (strain ATCC 43494 / DSM 8903 / Tp8T 6331) protein is Glutamate-1-semialdehyde 2,1-aminomutase.